The following is a 227-amino-acid chain: LysM and putative peptidoglycan-binding domain-containing protein 1 (227 aa).

Ser23 and Ser33 each carry phosphoserine. The LysM domain maps to Leu40 to Ile84. The interval Asn95–Phe157 is disordered. The segment covering Asp98–Glu108 has biased composition (acidic residues). A Phosphoserine modification is found at Ser99. Polar residues predominate over residues Gln143–Leu152. A phosphoserine mark is found at Ser166, Ser181, Ser194, and Ser212. Residues Lys169 to Leu227 are disordered. The span at Thr216–Leu227 shows a compositional bias: basic and acidic residues.

In Rattus norvegicus (Rat), this protein is LysM and putative peptidoglycan-binding domain-containing protein 1 (Lysmd1).